The chain runs to 297 residues: 4-hydroxy-tetrahydrodipicolinate synthase (297 aa).

Pyruvate is bound at residue Thr-47. Tyr-135 functions as the Proton donor/acceptor in the catalytic mechanism. Lys-163 acts as the Schiff-base intermediate with substrate in catalysis. Residue Ile-205 coordinates pyruvate.

The protein belongs to the DapA family. In terms of assembly, homotetramer; dimer of dimers.

It localises to the cytoplasm. The catalysed reaction is L-aspartate 4-semialdehyde + pyruvate = (2S,4S)-4-hydroxy-2,3,4,5-tetrahydrodipicolinate + H2O + H(+). Its pathway is amino-acid biosynthesis; L-lysine biosynthesis via DAP pathway; (S)-tetrahydrodipicolinate from L-aspartate: step 3/4. Functionally, catalyzes the condensation of (S)-aspartate-beta-semialdehyde [(S)-ASA] and pyruvate to 4-hydroxy-tetrahydrodipicolinate (HTPA). This is 4-hydroxy-tetrahydrodipicolinate synthase from Dehalococcoides mccartyi (strain ATCC BAA-2100 / JCM 16839 / KCTC 5957 / BAV1).